We begin with the raw amino-acid sequence, 344 residues long: MSNLKWFWLFLKTRSNWIFWIVFLHLILLGMAYIDYDISIESIGFIVTLNLGLTAMFLIFTFLKEVKLYQHLYNNKEIEEIKHKDLAEDPFQKEVVNYLYRKLTSQKERVVEQQLHIQSTEQSLTEFVHDIKTPVTAMKLLIDQEEEGKRKKSLLYEWARINELLDKQLYLTRLESKNRDMYFEETSLKRLVIDEVQLTRHISQAKGIGYDLDLETNLDVYTDVKWCRMMIRQILSNSLKYSQGQDIIIRSYTNDGHVTLEIKDFGRGISHKDLPRIFERGFTSTVNRNETTSSGIGLYLVNSVKDQLGINVRVESTVGQGTTFVLTFPKQNELMARMTQVTTM.

2 helical membrane-spanning segments follow: residues 18 to 38 (IFWI…DYDI) and 43 to 63 (IGFI…FTFL). The Histidine kinase domain occupies 126–332 (EFVHDIKTPV…TFVLTFPKQN (207 aa)). Position 129 is a phosphohistidine; by autocatalysis (His129).

Autophosphorylated.

Its subcellular location is the cell membrane. The enzyme catalyses ATP + protein L-histidine = ADP + protein N-phospho-L-histidine.. Functionally, member of the two-component regulatory system GraR/GraS involved in resistance against cationic antimicrobial peptides (CAMPs). GraS probably functions as a sensor protein kinase which is autophosphorylated at a histidine residue and transfers its phosphate group to GraR. This Staphylococcus haemolyticus (strain JCSC1435) protein is Sensor histidine kinase GraS (graS).